A 244-amino-acid chain; its full sequence is 5'-deoxynucleotidase (244 aa).

The catalysed reaction is a 2'-deoxyribonucleoside 5'-phosphate + H2O = a 2'-deoxyribonucleoside + phosphate. In terms of biological role, following host DNA degradation, is responsible for the degradation of 5'-dNMP's to deoxynucleosides that can be further excreted. Active on deoxynucleoside 5'-monophosphates but not active as a phosphatase on ribonucleotides, deoxynucleoside 5'-triphosphates, deoxynucleoside 3'-monophosphates, or deoxyoligonucleotides. The sequence is that of 5'-deoxynucleotidase (dmp) from Escherichia coli (Enterobacteria phage T5).